Here is a 209-residue protein sequence, read N- to C-terminus: ATP-dependent dethiobiotin synthetase BioD (209 aa).

Aspartate 13–valine 18 contributes to the ATP binding site. Threonine 17 contributes to the Mg(2+) binding site. Lysine 33 is a catalytic residue. Mg(2+) is bound at residue glutamate 100. Residues glutamate 100–glycine 103 and proline 184–leucine 186 contribute to the ATP site.

Belongs to the dethiobiotin synthetase family. In terms of assembly, homodimer. Requires Mg(2+) as cofactor.

The protein resides in the cytoplasm. The catalysed reaction is (7R,8S)-7,8-diammoniononanoate + CO2 + ATP = (4R,5S)-dethiobiotin + ADP + phosphate + 3 H(+). Its pathway is cofactor biosynthesis; biotin biosynthesis; biotin from 7,8-diaminononanoate: step 1/2. Its function is as follows. Catalyzes a mechanistically unusual reaction, the ATP-dependent insertion of CO2 between the N7 and N8 nitrogen atoms of 7,8-diaminopelargonic acid (DAPA, also called 7,8-diammoniononanoate) to form a ureido ring. This Rhizorhabdus wittichii (strain DSM 6014 / CCUG 31198 / JCM 15750 / NBRC 105917 / EY 4224 / RW1) (Sphingomonas wittichii) protein is ATP-dependent dethiobiotin synthetase BioD.